A 520-amino-acid polypeptide reads, in one-letter code: Putative cytochrome P450 CYP13A5 (520 aa).

Cysteine 464 lines the heme pocket.

It belongs to the cytochrome P450 family. Heme is required as a cofactor.

In terms of biological role, cytochromes P450 are a group of heme-thiolate monooxygenases. They oxidize a variety of structurally unrelated compounds, including steroids, fatty acids, and xenobiotics. The sequence is that of Putative cytochrome P450 CYP13A5 (cyp-13A5) from Caenorhabditis elegans.